A 329-amino-acid chain; its full sequence is Quinone oxidoreductase (329 aa).

A2 carries the post-translational modification N-acetylalanine. The residue at position 23 (K23) is an N6-acetyllysine. NADP(+)-binding positions include Y53, 158 to 161, G181, H200, N229, 246 to 249, and 269 to 271; these read SGGV, VGSR, and VAL. Position 248 is a phosphoserine (S248).

Belongs to the zinc-containing alcohol dehydrogenase family. Quinone oxidoreductase subfamily. Homotetramer.

It localises to the cytoplasm. The catalysed reaction is 2 a quinone + NADPH + H(+) = 2 a 1,4-benzosemiquinone + NADP(+). Does not have alcohol dehydrogenase activity. Binds NADP and acts through a one-electron transfer process. Orthoquinones, such as 1,2-naphthoquinone or 9,10-phenanthrenequinone, are the best substrates (in vitro). May act in the detoxification of xenobiotics. Interacts with (AU)-rich elements (ARE) in the 3'-UTR of target mRNA species and enhances their stability. NADPH binding interferes with mRNA binding. This Sus scrofa (Pig) protein is Quinone oxidoreductase (CRYZ).